Reading from the N-terminus, the 478-residue chain is Sulfate adenylyltransferase subunit 1 (478 aa).

Residues 24-240 (KSLLRFLTCG…VLENVDIDAD (217 aa)) enclose the tr-type G domain. A G1 region spans residues 33-40 (GSVDDGKS). GTP is bound at residue 33–40 (GSVDDGKS). The tract at residues 91–95 (GITID) is G2. The tract at residues 112–115 (DTPG) is G3. GTP contacts are provided by residues 112 to 116 (DTPGH) and 167 to 170 (NKMD). The interval 167 to 170 (NKMD) is G4. Residues 206 to 208 (SAL) are G5.

This sequence belongs to the TRAFAC class translation factor GTPase superfamily. Classic translation factor GTPase family. CysN/NodQ subfamily. As to quaternary structure, heterodimer composed of CysD, the smaller subunit, and CysN.

It carries out the reaction sulfate + ATP + H(+) = adenosine 5'-phosphosulfate + diphosphate. Its pathway is sulfur metabolism; hydrogen sulfide biosynthesis; sulfite from sulfate: step 1/3. Its function is as follows. With CysD forms the ATP sulfurylase (ATPS) that catalyzes the adenylation of sulfate producing adenosine 5'-phosphosulfate (APS) and diphosphate, the first enzymatic step in sulfur assimilation pathway. APS synthesis involves the formation of a high-energy phosphoric-sulfuric acid anhydride bond driven by GTP hydrolysis by CysN coupled to ATP hydrolysis by CysD. In Aliivibrio fischeri (strain ATCC 700601 / ES114) (Vibrio fischeri), this protein is Sulfate adenylyltransferase subunit 1.